We begin with the raw amino-acid sequence, 161 residues long: 18.1 kDa class I heat shock protein (161 aa).

The sHSP domain maps to Asp-45–Ala-160.

This sequence belongs to the small heat shock protein (HSP20) family. As to quaternary structure, may form oligomeric structures. Binds to AKR2A.

It is found in the cytoplasm. The polypeptide is 18.1 kDa class I heat shock protein (HSP18.1) (Arabidopsis thaliana (Mouse-ear cress)).